The sequence spans 578 residues: MACGFRRSIASQLSRVLDLPPENLIKSISAVPISRKEEVADFQLSVDSLLENNNDHSRPDIQIQAMRLAEKLKCDTVVSEISTGQGTVNFKINRELLTKTVLQQVIEDGSKYGLKSELFSGLPKKRIVVEFSSPNVAKKFHVGHLRSTIIGNFIANLKEALGHQVTRINYLGDWGMQFGLLGTGFQLFGYEEKLQSSPLQHLFEVYVQVNKEAADDKNVAKSAHEFFQRLELGDMQALALWQKFRDLSIDEYMRIYQRLGVHFDEYSGESFYREKSQEVLKLLDSKGLLQKTLKGTAVVDLSGNGDPSSVCTVMRSDGTSLYATRDLAAAIDRMEKYNFDKMIYVTDKGQKKHFQQVFQILQIMGYDWAERCQHVPFGVVQGMKTRRGDVTFLEDVLNEIRLRMLQNMASIKTTKELENPEETAEQVGLAALIIQDFRGFLLSDYQFSWDRVFQSRGDTGVFLQYTHARLHSLEETFGCGYLNDFNTACLQEPQSVSILQHLLRFDEVLYRSSQDLQPRHIVSYLLTLSHLAAVAHRTLHVRNSPPEVAGARLHLFRAVRSVLANGMKLLGITPVCRM.

A mitochondrion-targeting transit peptide spans 1 to 16; sequence MACGFRRSIASQLSRV. L-arginine contacts are provided by residues 133–135, His-144, Tyr-322, Asp-326, and Gln-350; that span reads SPN. The short motif at 133 to 144 is the 'HIGH' region element; the sequence is SPNVAKKFHVGH. At Lys-568 the chain carries N6-acetyllysine.

This sequence belongs to the class-I aminoacyl-tRNA synthetase family.

Its subcellular location is the mitochondrion membrane. The catalysed reaction is tRNA(Arg) + L-arginine + ATP = L-arginyl-tRNA(Arg) + AMP + diphosphate. In terms of biological role, catalyzes the attachment of arginine to tRNA(Arg) in a two-step reaction: arginine is first activated by ATP to form Arg-AMP and then transferred to the acceptor end of tRNA(Arg). The chain is Probable arginine--tRNA ligase, mitochondrial (RARS2) from Bos taurus (Bovine).